Consider the following 284-residue polypeptide: 3-methyl-2-oxobutanoate hydroxymethyltransferase (284 aa).

The Mg(2+) site is built by D44 and D83. 3-methyl-2-oxobutanoate contacts are provided by residues D44 to S45, D83, and K112. Mg(2+) is bound at residue E114. E181 functions as the Proton acceptor in the catalytic mechanism.

It belongs to the PanB family. As to quaternary structure, homodecamer; pentamer of dimers. It depends on Mg(2+) as a cofactor.

The protein resides in the cytoplasm. The catalysed reaction is 3-methyl-2-oxobutanoate + (6R)-5,10-methylene-5,6,7,8-tetrahydrofolate + H2O = 2-dehydropantoate + (6S)-5,6,7,8-tetrahydrofolate. It participates in cofactor biosynthesis; coenzyme A biosynthesis. Neither activated nor inhibited by coenzyme A. Catalyzes the reversible reaction in which hydroxymethyl group from 5,10-methylenetetrahydrofolate is transferred onto alpha-ketoisovalerate to form ketopantoate. This is 3-methyl-2-oxobutanoate hydroxymethyltransferase from Thermococcus kodakarensis (strain ATCC BAA-918 / JCM 12380 / KOD1) (Pyrococcus kodakaraensis (strain KOD1)).